The primary structure comprises 87 residues: Small ribosomal subunit protein bS21m (87 aa).

It belongs to the bacterial ribosomal protein bS21 family. As to quaternary structure, component of the mitochondrial ribosome small subunit (28S) which comprises a 12S rRNA and about 30 distinct proteins.

The protein resides in the mitochondrion. This Mus musculus (Mouse) protein is Small ribosomal subunit protein bS21m (Mrps21).